A 490-amino-acid chain; its full sequence is Acetyl-coenzyme A carboxylase carboxyl transferase subunit beta, chloroplastic (490 aa).

The interval 184 to 203 (LNSSENEGSSRRTRTKGSDL) is disordered. Residues 221-490 (LWVQCENCYG…PLNQKSSKIK (270 aa)) enclose the CoA carboxyltransferase N-terminal domain. Zn(2+) contacts are provided by C225, C228, C244, and C247. The segment at 225-247 (CENCYGLNYKKFLKSKMNICEQC) adopts a C4-type zinc-finger fold.

This sequence belongs to the AccD/PCCB family. As to quaternary structure, acetyl-CoA carboxylase is a heterohexamer composed of biotin carboxyl carrier protein, biotin carboxylase and 2 subunits each of ACCase subunit alpha and ACCase plastid-coded subunit beta (accD). Zn(2+) is required as a cofactor.

Its subcellular location is the plastid. The protein localises to the chloroplast stroma. The catalysed reaction is N(6)-carboxybiotinyl-L-lysyl-[protein] + acetyl-CoA = N(6)-biotinyl-L-lysyl-[protein] + malonyl-CoA. Its pathway is lipid metabolism; malonyl-CoA biosynthesis; malonyl-CoA from acetyl-CoA: step 1/1. Component of the acetyl coenzyme A carboxylase (ACC) complex. Biotin carboxylase (BC) catalyzes the carboxylation of biotin on its carrier protein (BCCP) and then the CO(2) group is transferred by the transcarboxylase to acetyl-CoA to form malonyl-CoA. The sequence is that of Acetyl-coenzyme A carboxylase carboxyl transferase subunit beta, chloroplastic from Solanum bulbocastanum (Wild potato).